The sequence spans 65 residues: Hainantoxin-X.3 (65 aa).

A signal peptide spans 1-20; sequence MNMKILVLVAVLCLVVSTHA. The propeptide occupies 21 to 37; the sequence is ERHSKTDMGDSPMIQER. 3 cysteine pairs are disulfide-bonded: Cys39–Cys56, Cys46–Cys59, and Cys55–Cys64.

It belongs to the neurotoxin 36 family. 02 subfamily. In terms of tissue distribution, expressed by the venom gland.

The protein resides in the secreted. Functionally, reversibly blocks N-type calcium channels (Cav2.2/CACNA1B) in rat dorsal root ganglion cells. Elicits no toxic symptoms in either vertebrates or invertebrates during a period of 48 hours post-injection, when it was assayed in vivo by direct injection into mice and cockroaches. The polypeptide is Hainantoxin-X.3 (Cyriopagopus hainanus (Chinese bird spider)).